The following is a 72-amino-acid chain: Large ribosomal subunit protein uL29 (72 aa).

It belongs to the universal ribosomal protein uL29 family.

This chain is Large ribosomal subunit protein uL29, found in Prochlorococcus marinus (strain MIT 9312).